The following is a 426-amino-acid chain: Limonoid 21-O-acetyltransferse (426 aa).

Residues H152 and D365 each act as proton acceptor in the active site.

The protein belongs to the plant acyltransferase family. Monomer. Expressed in maturing fruits and in juice vesicles.

The catalysed reaction is isomeliandiol + acetyl-CoA = 21-O-acetyl-isomeliandiol + CoA. It functions in the pathway secondary metabolite biosynthesis; terpenoid biosynthesis. Acetyltransferase involved in the biosynthesis of limonoids triterpene natural products such as limonin, a compound with insecticidal activity responsible for the bitter taste in citrus. Catalyzes the formation of 21-O-acetyl-isomeliandiol from isomeliandiol. The polypeptide is Limonoid 21-O-acetyltransferse (Citrus sinensis (Sweet orange)).